We begin with the raw amino-acid sequence, 224 residues long: Pre-hexon-linking protein VIII (224 aa).

T64 is subject to Phosphothreonine; by host. The propeptide occupies 112 to 154 (RQLCPSQIGIKSPVLAGTGIQLSEDIPSASWIRPDGIFQLGGG).

The protein belongs to the adenoviridae hexon-linking protein family. In terms of assembly, interacts with the peripentonal hexons as well as the hexons in the facets. Part of a complex composed of the core-capsid bridging protein, the endosome lysis protein VI and the hexon-linking protein VIII; these interactions bridge the virus core to the capsid. Cleaved by the viral protease during virion maturation. May cause the middle segment to be shed from the capsid.

It is found in the virion. The protein localises to the host nucleus. In terms of biological role, structural component of the virion that acts as a cement protein on the capsid interior and which glue the peripentonal hexons and group-of-nine hexons together. The polypeptide is Pre-hexon-linking protein VIII (Canis lupus familiaris (Dog)).